Here is a 393-residue protein sequence, read N- to C-terminus: Protein TsgA (393 aa).

Residues 1–10 (MTNSNRIKLT) are Cytoplasmic-facing. The chain crosses the membrane as a helical span at residues 11 to 31 (WISFLSYALTGALVIVTGMVM). Over 32–50 (GNIADYFHLPVSSMSNTFT) the chain is Periplasmic. A helical transmembrane segment spans residues 51 to 71 (FLNAGILISIFLNAWLMEIIP). At 72–77 (LKTQLR) the chain is on the cytoplasmic side. Residues 78–98 (FGFILMVLAVAGLMFGHSLAL) form a helical membrane-spanning segment. The Periplasmic portion of the chain corresponds to 99–100 (FS). The helical transmembrane segment at 101 to 121 (AAMFVLGLVSGITMSIGTFLI) threads the bilayer. Residues 122 to 133 (TQLYEGRQRGSR) lie on the Cytoplasmic side of the membrane. The chain crosses the membrane as a helical span at residues 134 to 154 (LLFTDSFFSMAGMIFPMVAAF). The Periplasmic portion of the chain corresponds to 155 to 161 (LLARSIE). The chain crosses the membrane as a helical span at residues 162 to 182 (WYWVYACIGLVYLAIFILTFG). Topologically, residues 183 to 205 (CEFPALGKHAQHSQAPVVKEKWG) are cytoplasmic. A helical transmembrane segment spans residues 206 to 226 (IGVLFLAVAALCYILGQLGFI). Topologically, residues 227 to 244 (SWVPEYAKGLGMSLNDAG) are periplasmic. Residues 245 to 265 (ALVSDFWMSYMFGMWAFSFIL) form a helical membrane-spanning segment. Topologically, residues 266–272 (RFFDLQR) are cytoplasmic. A helical membrane pass occupies residues 273–293 (ILTVLAGMAAVLMYLFITGTQ). Residues 294–297 (AHMP) lie on the Periplasmic side of the membrane. A helical transmembrane segment spans residues 298–318 (WFILTLGFFSSAIYTSIITLG). Over 319-331 (SQQTKVASPKLVN) the chain is Cytoplasmic. Residues 332-352 (FILTCGTIGTMLTFVVTGPIV) form a helical membrane-spanning segment. Topologically, residues 353-360 (AHSGPQAA) are periplasmic. Residues 361–381 (LLTANGLYAVVFVMCFALGFV) form a helical membrane-spanning segment. Residues 382-393 (SRHRQHSAPATH) lie on the Cytoplasmic side of the membrane.

Belongs to the major facilitator superfamily. TsgA family.

The protein resides in the cell inner membrane. The polypeptide is Protein TsgA (Salmonella choleraesuis (strain SC-B67)).